The following is a 407-amino-acid chain: Protein RecA (407 aa).

79–86 (GPESSGKT) serves as a coordination point for ATP. The interval 358–407 (LSLEASPEESDAKTLRRXASRGAGASSSRVQEGSAANDHFQDESTTAKLL) is disordered. A compositionally biased stretch (low complexity) spans 377 to 386 (SRGAGASSSR).

This sequence belongs to the RecA family.

It localises to the cytoplasm. Functionally, can catalyze the hydrolysis of ATP in the presence of single-stranded DNA, the ATP-dependent uptake of single-stranded DNA by duplex DNA, and the ATP-dependent hybridization of homologous single-stranded DNAs. It interacts with LexA causing its activation and leading to its autocatalytic cleavage. This Treponema pallidum (strain Nichols) protein is Protein RecA.